We begin with the raw amino-acid sequence, 374 residues long: Queuine tRNA-ribosyltransferase (374 aa).

Catalysis depends on Asp89, which acts as the Proton acceptor. Substrate contacts are provided by residues 89–93, Asp143, Gln187, and Gly214; that span reads DSGGF. Positions 245-251 are RNA binding; it reads GVGKPED. The active-site Nucleophile is Asp264. The RNA binding; important for wobble base 34 recognition stretch occupies residues 269–273; sequence TRNAR. Zn(2+) contacts are provided by Cys302, Cys304, Cys307, and His333.

The protein belongs to the queuine tRNA-ribosyltransferase family. As to quaternary structure, homodimer. Within each dimer, one monomer is responsible for RNA recognition and catalysis, while the other monomer binds to the replacement base PreQ1. Requires Zn(2+) as cofactor.

It catalyses the reaction 7-aminomethyl-7-carbaguanine + guanosine(34) in tRNA = 7-aminomethyl-7-carbaguanosine(34) in tRNA + guanine. The protein operates within tRNA modification; tRNA-queuosine biosynthesis. Functionally, catalyzes the base-exchange of a guanine (G) residue with the queuine precursor 7-aminomethyl-7-deazaguanine (PreQ1) at position 34 (anticodon wobble position) in tRNAs with GU(N) anticodons (tRNA-Asp, -Asn, -His and -Tyr). Catalysis occurs through a double-displacement mechanism. The nucleophile active site attacks the C1' of nucleotide 34 to detach the guanine base from the RNA, forming a covalent enzyme-RNA intermediate. The proton acceptor active site deprotonates the incoming PreQ1, allowing a nucleophilic attack on the C1' of the ribose to form the product. After dissociation, two additional enzymatic reactions on the tRNA convert PreQ1 to queuine (Q), resulting in the hypermodified nucleoside queuosine (7-(((4,5-cis-dihydroxy-2-cyclopenten-1-yl)amino)methyl)-7-deazaguanosine). In Shewanella loihica (strain ATCC BAA-1088 / PV-4), this protein is Queuine tRNA-ribosyltransferase.